Consider the following 256-residue polypeptide: Trans-aconitate 2-methyltransferase (256 aa).

The protein belongs to the methyltransferase superfamily. Tam family.

Its subcellular location is the cytoplasm. It catalyses the reaction trans-aconitate + S-adenosyl-L-methionine = (E)-3-(methoxycarbonyl)pent-2-enedioate + S-adenosyl-L-homocysteine. Functionally, catalyzes the S-adenosylmethionine monomethyl esterification of trans-aconitate. The protein is Trans-aconitate 2-methyltransferase of Rhodopseudomonas palustris (strain BisB5).